Reading from the N-terminus, the 629-residue chain is tRNA uridine 5-carboxymethylaminomethyl modification enzyme MnmG (629 aa).

FAD contacts are provided by residues 14–19, Val-126, and Ser-181; that span reads GAGHAG. Residue 273–287 coordinates NAD(+); it reads GPRYCPSIEDKVVRF. Gln-370 lines the FAD pocket.

This sequence belongs to the MnmG family. As to quaternary structure, homodimer. Heterotetramer of two MnmE and two MnmG subunits. FAD serves as cofactor.

The protein resides in the cytoplasm. Its function is as follows. NAD-binding protein involved in the addition of a carboxymethylaminomethyl (cmnm) group at the wobble position (U34) of certain tRNAs, forming tRNA-cmnm(5)s(2)U34. This chain is tRNA uridine 5-carboxymethylaminomethyl modification enzyme MnmG, found in Bacillus thuringiensis (strain Al Hakam).